The following is an 81-amino-acid chain: Acylphosphatase (81 aa).

The Acylphosphatase-like domain maps to 1–81; the sequence is MYIFHGRVQG…VKYNDFQIRY (81 aa). Residues R14 and N32 contribute to the active site.

This sequence belongs to the acylphosphatase family.

The catalysed reaction is an acyl phosphate + H2O = a carboxylate + phosphate + H(+). This Picrophilus torridus (strain ATCC 700027 / DSM 9790 / JCM 10055 / NBRC 100828 / KAW 2/3) protein is Acylphosphatase (acyP).